The following is a 468-amino-acid chain: Protein phosphatase ppm-1.A (468 aa).

Residues 1-23 (MTISRADLQIASSAEPKTHGNLN) form a disordered region. Residues 106–381 (RYGMSSMQGW…DNMTMVVVCF (276 aa)) enclose the PPM-type phosphatase domain. D145, G146, D329, and D372 together coordinate Mn(2+).

This sequence belongs to the PP2C family. The cofactor is Mg(2+). Mn(2+) serves as cofactor. Expressed in neurons of the nerve ring and motor neurons of the ventral nerve cord.

It localises to the synapse. The enzyme catalyses O-phospho-L-seryl-[protein] + H2O = L-seryl-[protein] + phosphate. It carries out the reaction O-phospho-L-threonyl-[protein] + H2O = L-threonyl-[protein] + phosphate. In terms of biological role, probable phosphatase which regulates axon termination in ALM and PLM neurons, and synaptic branch extension and/or stabilization in PLM neurons. Plays a role in synapse formation in GABAergic DD motor neurons probably by dephosphorylating pmk-3 thereby negatively regulating a MAP kinase pathway that includes dlk-1, mkk-4 and pmk-3. The sequence is that of Protein phosphatase ppm-1.A from Caenorhabditis elegans.